A 99-amino-acid polypeptide reads, in one-letter code: NADH-ubiquinone oxidoreductase chain 2 (99 aa).

2 helical membrane-spanning segments follow: residues 22–42 and 65–85; these read FLTFIGILLSGITAFYYIQII and VMISITTLLLILFFADNSIFI.

Belongs to the complex I subunit 2 family.

Its subcellular location is the mitochondrion inner membrane. The catalysed reaction is a ubiquinone + NADH + 5 H(+)(in) = a ubiquinol + NAD(+) + 4 H(+)(out). In terms of biological role, core subunit of the mitochondrial membrane respiratory chain NADH dehydrogenase (Complex I) that is believed to belong to the minimal assembly required for catalysis. Complex I functions in the transfer of electrons from NADH to the respiratory chain. The immediate electron acceptor for the enzyme is believed to be ubiquinone. This chain is NADH-ubiquinone oxidoreductase chain 2 (ND2), found in Cyanidium caldarium (Red alga).